Consider the following 93-residue polypeptide: Pyrimidine/purine nucleoside phosphorylase (93 aa).

The protein belongs to the nucleoside phosphorylase PpnP family.

The enzyme catalyses a purine D-ribonucleoside + phosphate = a purine nucleobase + alpha-D-ribose 1-phosphate. The catalysed reaction is adenosine + phosphate = alpha-D-ribose 1-phosphate + adenine. It catalyses the reaction cytidine + phosphate = cytosine + alpha-D-ribose 1-phosphate. It carries out the reaction guanosine + phosphate = alpha-D-ribose 1-phosphate + guanine. The enzyme catalyses inosine + phosphate = alpha-D-ribose 1-phosphate + hypoxanthine. The catalysed reaction is thymidine + phosphate = 2-deoxy-alpha-D-ribose 1-phosphate + thymine. It catalyses the reaction uridine + phosphate = alpha-D-ribose 1-phosphate + uracil. It carries out the reaction xanthosine + phosphate = alpha-D-ribose 1-phosphate + xanthine. Functionally, catalyzes the phosphorolysis of diverse nucleosides, yielding D-ribose 1-phosphate and the respective free bases. Can use uridine, adenosine, guanosine, cytidine, thymidine, inosine and xanthosine as substrates. Also catalyzes the reverse reactions. This chain is Pyrimidine/purine nucleoside phosphorylase, found in Vibrio atlanticus (strain LGP32) (Vibrio splendidus (strain Mel32)).